Consider the following 363-residue polypeptide: S-adenosylmethionine:tRNA ribosyltransferase-isomerase (363 aa).

This sequence belongs to the QueA family. As to quaternary structure, monomer.

The protein resides in the cytoplasm. The catalysed reaction is 7-aminomethyl-7-carbaguanosine(34) in tRNA + S-adenosyl-L-methionine = epoxyqueuosine(34) in tRNA + adenine + L-methionine + 2 H(+). It participates in tRNA modification; tRNA-queuosine biosynthesis. Transfers and isomerizes the ribose moiety from AdoMet to the 7-aminomethyl group of 7-deazaguanine (preQ1-tRNA) to give epoxyqueuosine (oQ-tRNA). This chain is S-adenosylmethionine:tRNA ribosyltransferase-isomerase, found in Brucella anthropi (strain ATCC 49188 / DSM 6882 / CCUG 24695 / JCM 21032 / LMG 3331 / NBRC 15819 / NCTC 12168 / Alc 37) (Ochrobactrum anthropi).